Here is an 80-residue protein sequence, read N- to C-terminus: Exodeoxyribonuclease 7 small subunit (80 aa).

This sequence belongs to the XseB family. Heterooligomer composed of large and small subunits.

The protein resides in the cytoplasm. It carries out the reaction Exonucleolytic cleavage in either 5'- to 3'- or 3'- to 5'-direction to yield nucleoside 5'-phosphates.. Functionally, bidirectionally degrades single-stranded DNA into large acid-insoluble oligonucleotides, which are then degraded further into small acid-soluble oligonucleotides. This Vibrio vulnificus (strain CMCP6) protein is Exodeoxyribonuclease 7 small subunit.